Here is a 436-residue protein sequence, read N- to C-terminus: GTPase Der (436 aa).

2 EngA-type G domains span residues 4–167 (PVVA…PEVE) and 174–350 (VRVA…EQRT). GTP contacts are provided by residues 10 to 17 (GRPNVGKS), 57 to 61 (DTGGL), 120 to 123 (NKVD), 180 to 187 (GRPNVGKS), 227 to 231 (DTAGL), and 292 to 295 (NKWD). In terms of domain architecture, KH-like spans 351–435 (RRISTSEVND…PLRIILRRKN (85 aa)).

It belongs to the TRAFAC class TrmE-Era-EngA-EngB-Septin-like GTPase superfamily. EngA (Der) GTPase family. As to quaternary structure, associates with the 50S ribosomal subunit.

In terms of biological role, GTPase that plays an essential role in the late steps of ribosome biogenesis. This Gemmatimonas aurantiaca (strain DSM 14586 / JCM 11422 / NBRC 100505 / T-27) protein is GTPase Der.